An 86-amino-acid polypeptide reads, in one-letter code: Neurotoxin LmNaTx34.1 (86 aa).

The N-terminal stretch at 1 to 18 is a signal peptide; that stretch reads MKTVILVVIALMVIEVQG. Residues 19–85 enclose the LCN-type CS-alpha/beta domain; the sequence is DGYLMVRAGI…IWTYEKNTCS (67 aa). 4 disulfide bridges follow: C32-C84, C36-C57, C43-C64, and C47-C66.

Belongs to the long (4 C-C) scorpion toxin superfamily. Sodium channel inhibitor family. Beta subfamily. In terms of tissue distribution, expressed by the venom gland.

It is found in the secreted. Its function is as follows. Binds voltage-independently at site-4 of sodium channels (Nav) and shift the voltage of activation toward more negative potentials thereby affecting sodium channel activation and promoting spontaneous and repetitive firing. The protein is Neurotoxin LmNaTx34.1 of Lychas mucronatus (Chinese swimming scorpion).